Here is a 232-residue protein sequence, read N- to C-terminus: uncharacterized protein (232 aa).

The Autotransporter domain occupies 1-232 (MIIKKSGGRW…LYTMGVSARF (232 aa)).

This is an uncharacterized protein from Escherichia coli (strain K12).